A 102-amino-acid polypeptide reads, in one-letter code: Large ribosomal subunit protein uL24 (102 aa).

It belongs to the universal ribosomal protein uL24 family. As to quaternary structure, part of the 50S ribosomal subunit.

Functionally, one of two assembly initiator proteins, it binds directly to the 5'-end of the 23S rRNA, where it nucleates assembly of the 50S subunit. Its function is as follows. One of the proteins that surrounds the polypeptide exit tunnel on the outside of the subunit. The polypeptide is Large ribosomal subunit protein uL24 (Ralstonia nicotianae (strain ATCC BAA-1114 / GMI1000) (Ralstonia solanacearum)).